A 214-amino-acid polypeptide reads, in one-letter code: Octanoyltransferase (214 aa).

Positions 28 to 203 (GSGAETLLLL…RFEGFLDEFM (176 aa)) constitute a BPL/LPL catalytic domain. Substrate contacts are provided by residues 66–73 (RGGDVTYH), 133–135 (SIG), and 146–148 (GFA). The active-site Acyl-thioester intermediate is the Cys-164.

This sequence belongs to the LipB family.

Its subcellular location is the cytoplasm. It carries out the reaction octanoyl-[ACP] + L-lysyl-[protein] = N(6)-octanoyl-L-lysyl-[protein] + holo-[ACP] + H(+). Its pathway is protein modification; protein lipoylation via endogenous pathway; protein N(6)-(lipoyl)lysine from octanoyl-[acyl-carrier-protein]: step 1/2. Catalyzes the transfer of endogenously produced octanoic acid from octanoyl-acyl-carrier-protein onto the lipoyl domains of lipoate-dependent enzymes. Lipoyl-ACP can also act as a substrate although octanoyl-ACP is likely to be the physiological substrate. In Geotalea uraniireducens (strain Rf4) (Geobacter uraniireducens), this protein is Octanoyltransferase.